Reading from the N-terminus, the 952-residue chain is G patch domain-containing protein 1 homolog (952 aa).

6 disordered regions span residues 104–127, 165–233, 320–345, 370–432, 660–711, and 822–952; these read QGIR…QRRR, GWKP…DDYE, DKKP…EDNS, RSRF…KDHS, PEKV…RNKP, and VAPE…KSKH. Positions 107-123 are enriched in basic and acidic residues; it reads RTRDEFANEDEQKQRSD. A G-patch domain is found at 153 to 199; the sequence is RDKVAVRILKSMGWKPGQGVGPRQTRKEKRQATARNSKEQYLMEHYG. Positions 214-233 are enriched in acidic residues; that stretch reads DSNNEDEDDEDITFAPDDYE. The span at 323-333 shows a compositional bias: basic residues; that stretch reads PKQKKQQHVQQ. Basic and acidic residues-rich tracts occupy residues 375–402, 414–432, and 679–691; these read PMDK…DLNP, QEEK…KDHS, and IQDK…EPSK. Over residues 886 to 896 the composition is skewed to low complexity; it reads ASSSNESSSSD. 2 stretches are compositionally biased toward basic residues: residues 906–934 and 941–952; these read KLSK…KKSK and HKAKKKKKKSKH.

This sequence belongs to the GPATCH1 family.

The protein is G patch domain-containing protein 1 homolog of Drosophila melanogaster (Fruit fly).